Here is a 595-residue protein sequence, read N- to C-terminus: Aspartate--tRNA(Asp/Asn) ligase (595 aa).

Glu175 lines the L-aspartate pocket. Residues Gln199–Lys202 form an aspartate region. The L-aspartate site is built by Arg221 and His454. Arg221–Glu223 is an ATP binding site. An ATP-binding site is contributed by Glu488. Arg495 lines the L-aspartate pocket. Residue Gly540–Arg543 participates in ATP binding.

Belongs to the class-II aminoacyl-tRNA synthetase family. Type 1 subfamily. In terms of assembly, homodimer.

The protein localises to the cytoplasm. It carries out the reaction tRNA(Asx) + L-aspartate + ATP = L-aspartyl-tRNA(Asx) + AMP + diphosphate. Its function is as follows. Aspartyl-tRNA synthetase with relaxed tRNA specificity since it is able to aspartylate not only its cognate tRNA(Asp) but also tRNA(Asn). Reaction proceeds in two steps: L-aspartate is first activated by ATP to form Asp-AMP and then transferred to the acceptor end of tRNA(Asp/Asn). The chain is Aspartate--tRNA(Asp/Asn) ligase from Sinorhizobium fredii (strain NBRC 101917 / NGR234).